The primary structure comprises 105 residues: UPF0235 protein CT1832 (105 aa).

Belongs to the UPF0235 family.

The polypeptide is UPF0235 protein CT1832 (Chlorobaculum tepidum (strain ATCC 49652 / DSM 12025 / NBRC 103806 / TLS) (Chlorobium tepidum)).